We begin with the raw amino-acid sequence, 210 residues long: DNA replication complex GINS protein PSF3 (210 aa).

It belongs to the GINS3/PSF3 family. Component of the GINS complex which is a heterotetramer of gins1/psf1, gins2/psf2, gins3/psf3 and gins4/sld5. Component of the CMG helicase complex, composed of the mcm2-7 complex, the GINS complex and cdc45.

The protein resides in the nucleus. It localises to the chromosome. Functionally, required for correct functioning of the GINS complex, a complex that plays an essential role in the initiation of DNA replication, and progression of DNA replication forks. GINS complex is a core component of CDC45-MCM-GINS (CMG) helicase, the molecular machine that unwinds template DNA during replication, and around which the replisome is built. The chain is DNA replication complex GINS protein PSF3 from Xenopus laevis (African clawed frog).